The primary structure comprises 468 residues: Eukaryotic translation initiation factor 3 subunit M (468 aa).

A disordered region spans residues 40-61 (VAPLIEPLRQQEQSEEEPDRKQ). The 172-residue stretch at 206–377 (DLELAQTHVV…SEFLVHRATY (172 aa)) folds into the PCI domain. The disordered stretch occupies residues 419 to 468 (QAAAEEVGQGKSGDKGAKGGDRRRNPQQQQQSQPSQPQQAREVELVGGAE). Residues 430–442 (SGDKGAKGGDRRR) show a composition bias toward basic and acidic residues. The segment covering 444 to 457 (PQQQQQSQPSQPQQ) has biased composition (low complexity).

This sequence belongs to the eIF-3 subunit M family. Component of the eukaryotic translation initiation factor 3 (eIF-3) complex.

It localises to the cytoplasm. Functionally, component of the eukaryotic translation initiation factor 3 (eIF-3) complex, which is involved in protein synthesis of a specialized repertoire of mRNAs and, together with other initiation factors, stimulates binding of mRNA and methionyl-tRNAi to the 40S ribosome. The eIF-3 complex specifically targets and initiates translation of a subset of mRNAs involved in cell proliferation. The polypeptide is Eukaryotic translation initiation factor 3 subunit M (Aspergillus fumigatus (strain CBS 144.89 / FGSC A1163 / CEA10) (Neosartorya fumigata)).